Reading from the N-terminus, the 212-residue chain is Thiamine-phosphate synthase (212 aa).

4-amino-2-methyl-5-(diphosphooxymethyl)pyrimidine is bound by residues 39–43 (QLRIK) and Asn-71. Mg(2+) is bound by residues Asp-72 and Asp-91. A 4-amino-2-methyl-5-(diphosphooxymethyl)pyrimidine-binding site is contributed by Ser-110. 136–138 (TQT) is a binding site for 2-[(2R,5Z)-2-carboxy-4-methylthiazol-5(2H)-ylidene]ethyl phosphate. Lys-139 contributes to the 4-amino-2-methyl-5-(diphosphooxymethyl)pyrimidine binding site. Residues Gly-168 and 188-189 (VS) each bind 2-[(2R,5Z)-2-carboxy-4-methylthiazol-5(2H)-ylidene]ethyl phosphate.

This sequence belongs to the thiamine-phosphate synthase family. The cofactor is Mg(2+).

It catalyses the reaction 2-[(2R,5Z)-2-carboxy-4-methylthiazol-5(2H)-ylidene]ethyl phosphate + 4-amino-2-methyl-5-(diphosphooxymethyl)pyrimidine + 2 H(+) = thiamine phosphate + CO2 + diphosphate. It carries out the reaction 2-(2-carboxy-4-methylthiazol-5-yl)ethyl phosphate + 4-amino-2-methyl-5-(diphosphooxymethyl)pyrimidine + 2 H(+) = thiamine phosphate + CO2 + diphosphate. The catalysed reaction is 4-methyl-5-(2-phosphooxyethyl)-thiazole + 4-amino-2-methyl-5-(diphosphooxymethyl)pyrimidine + H(+) = thiamine phosphate + diphosphate. Its pathway is cofactor biosynthesis; thiamine diphosphate biosynthesis; thiamine phosphate from 4-amino-2-methyl-5-diphosphomethylpyrimidine and 4-methyl-5-(2-phosphoethyl)-thiazole: step 1/1. In terms of biological role, condenses 4-methyl-5-(beta-hydroxyethyl)thiazole monophosphate (THZ-P) and 2-methyl-4-amino-5-hydroxymethyl pyrimidine pyrophosphate (HMP-PP) to form thiamine monophosphate (TMP). This is Thiamine-phosphate synthase from Serratia proteamaculans (strain 568).